The chain runs to 279 residues: Orotidine 5'-phosphate decarboxylase (279 aa).

Residues D8, K30, D58–T67, T117, R177, Q186, G206, and R207 each bind substrate. K60 acts as the Proton donor in catalysis.

It belongs to the OMP decarboxylase family. Type 1 subfamily. In terms of assembly, homodimer.

It catalyses the reaction orotidine 5'-phosphate + H(+) = UMP + CO2. It participates in pyrimidine metabolism; UMP biosynthesis via de novo pathway; UMP from orotate: step 2/2. Catalyzes the decarboxylation of orotidine 5'-monophosphate (OMP) to uridine 5'-monophosphate (UMP). The sequence is that of Orotidine 5'-phosphate decarboxylase from Campylobacter jejuni subsp. jejuni serotype O:2 (strain ATCC 700819 / NCTC 11168).